The sequence spans 361 residues: Peptide chain release factor 1 (361 aa).

An N5-methylglutamine modification is found at Gln-235.

It belongs to the prokaryotic/mitochondrial release factor family. In terms of processing, methylated by PrmC. Methylation increases the termination efficiency of RF1.

It localises to the cytoplasm. Functionally, peptide chain release factor 1 directs the termination of translation in response to the peptide chain termination codons UAG and UAA. In Buchnera aphidicola subsp. Schizaphis graminum (strain Sg), this protein is Peptide chain release factor 1.